The sequence spans 302 residues: Pyridoxal 5'-phosphate synthase subunit PdxS (302 aa).

D-ribose 5-phosphate is bound at residue Asp32. Lys89 (schiff-base intermediate with D-ribose 5-phosphate) is an active-site residue. Residue Gly161 coordinates D-ribose 5-phosphate. Arg173 is a binding site for D-glyceraldehyde 3-phosphate. D-ribose 5-phosphate-binding positions include Gly222 and 243-244 (GS). Residues 278-302 (GIGKGMKGQSNEDLPDEEKLQGRGV) are disordered.

It belongs to the PdxS/SNZ family. In terms of assembly, in the presence of PdxT, forms a dodecamer of heterodimers.

It carries out the reaction aldehydo-D-ribose 5-phosphate + D-glyceraldehyde 3-phosphate + L-glutamine = pyridoxal 5'-phosphate + L-glutamate + phosphate + 3 H2O + H(+). It functions in the pathway cofactor biosynthesis; pyridoxal 5'-phosphate biosynthesis. Functionally, catalyzes the formation of pyridoxal 5'-phosphate from ribose 5-phosphate (RBP), glyceraldehyde 3-phosphate (G3P) and ammonia. The ammonia is provided by the PdxT subunit. Can also use ribulose 5-phosphate and dihydroxyacetone phosphate as substrates, resulting from enzyme-catalyzed isomerization of RBP and G3P, respectively. The protein is Pyridoxal 5'-phosphate synthase subunit PdxS of Halorubrum lacusprofundi (strain ATCC 49239 / DSM 5036 / JCM 8891 / ACAM 34).